A 400-amino-acid chain; its full sequence is Lipase member N (400 aa).

Residues 1 to 19 (MPMMWLFLTTACLIPGTLS) form the signal peptide. An AB hydrolase-1 domain is found at 81–381 (PVVYMQHALF…DWNHFDFVWG (301 aa)). Ser175 serves as the catalytic Nucleophile. Cys249 and Cys258 are joined by a disulfide. The N-linked (GlcNAc...) asparagine glycan is linked to Asn274. Residues Asp346 and His375 each act as charge relay system in the active site.

This sequence belongs to the AB hydrolase superfamily. Lipase family. In terms of tissue distribution, highly expressed in the epidermis. Also detected in other tissues, although at much lower levels, including liver and kidney.

The protein localises to the secreted. The enzyme catalyses a sterol ester + H2O = a sterol + a fatty acid + H(+). It catalyses the reaction a triacylglycerol + H2O = a 1,2-diacylglycerol + a fatty acid + H(+). The catalysed reaction is a triacylglycerol + H2O = a diacylglycerol + a fatty acid + H(+). It carries out the reaction a cholesterol ester + H2O = cholesterol + a fatty acid + H(+). Plays a highly specific role in the last step of keratinocyte differentiation. Contains two distinct domains: the alpha/beta hydrolase fold and the abhydrolase-associated lipase region, also features the consensus sequence of the active site of a genuine lipase. May have an essential function in lipid metabolism of the most differentiated epidermal layers. This Mus musculus (Mouse) protein is Lipase member N (Lipn).